The sequence spans 360 residues: Peptide chain release factor 1 (360 aa).

Residue glutamine 235 is modified to N5-methylglutamine.

It belongs to the prokaryotic/mitochondrial release factor family. Post-translationally, methylated by PrmC. Methylation increases the termination efficiency of RF1.

The protein localises to the cytoplasm. Functionally, peptide chain release factor 1 directs the termination of translation in response to the peptide chain termination codons UAG and UAA. The chain is Peptide chain release factor 1 from Methylobacillus flagellatus (strain ATCC 51484 / DSM 6875 / VKM B-1610 / KT).